The chain runs to 303 residues: N-acetyl-D-glucosamine kinase (303 aa).

Residues 4–11 (GFDIGGTK) and 133–140 (GVGGGLIF) each bind ATP. 4 residues coordinate Zn(2+): His-157, Cys-177, Cys-179, and Cys-184.

This sequence belongs to the ROK (NagC/XylR) family. NagK subfamily.

It carries out the reaction N-acetyl-D-glucosamine + ATP = N-acetyl-D-glucosamine 6-phosphate + ADP + H(+). Its pathway is cell wall biogenesis; peptidoglycan recycling. Its function is as follows. Catalyzes the phosphorylation of N-acetyl-D-glucosamine (GlcNAc) derived from cell-wall degradation, yielding GlcNAc-6-P. The sequence is that of N-acetyl-D-glucosamine kinase from Escherichia coli O6:H1 (strain CFT073 / ATCC 700928 / UPEC).